A 411-amino-acid chain; its full sequence is Imidazolonepropionase (411 aa).

Residues H78 and H80 each contribute to the Fe(3+) site. 2 residues coordinate Zn(2+): H78 and H80. 4-imidazolone-5-propanoate contacts are provided by R87, Y150, and H183. Y150 provides a ligand contact to N-formimidoyl-L-glutamate. Position 248 (H248) interacts with Fe(3+). H248 is a binding site for Zn(2+). 4-imidazolone-5-propanoate is bound at residue Q251. D322 contributes to the Fe(3+) binding site. D322 is a binding site for Zn(2+). 2 residues coordinate N-formimidoyl-L-glutamate: N324 and G326. Residue S327 participates in 4-imidazolone-5-propanoate binding.

Belongs to the metallo-dependent hydrolases superfamily. HutI family. It depends on Zn(2+) as a cofactor. Fe(3+) is required as a cofactor.

The protein resides in the cytoplasm. It catalyses the reaction 4-imidazolone-5-propanoate + H2O = N-formimidoyl-L-glutamate. It participates in amino-acid degradation; L-histidine degradation into L-glutamate; N-formimidoyl-L-glutamate from L-histidine: step 3/3. Functionally, catalyzes the hydrolytic cleavage of the carbon-nitrogen bond in imidazolone-5-propanoate to yield N-formimidoyl-L-glutamate. It is the third step in the universal histidine degradation pathway. This chain is Imidazolonepropionase, found in Flavobacterium johnsoniae (strain ATCC 17061 / DSM 2064 / JCM 8514 / BCRC 14874 / CCUG 350202 / NBRC 14942 / NCIMB 11054 / UW101) (Cytophaga johnsonae).